A 193-amino-acid chain; its full sequence is MIAHIQGKLVEKSPTEVVIDCNGVGYHVNISLHTYGLLPTTDFVKLFTHLIIKEDSHSLYGFAEKSEKEIFKLLISVSGIGANIARTMLSSIEPKQIINAIGSGDVGTIQSIKGIGVKTAQRTIIDLKEKVLKLYDLDQVSISQSNTNKDEALSALEVLGFIRKSAEKVVEKIVATMPDATVETIIKQALKNL.

Positions 1–63 (MIAHIQGKLV…EDSHSLYGFA (63 aa)) are domain I. The domain II stretch occupies residues 64–142 (EKSEKEIFKL…KLYDLDQVSI (79 aa)). The interval 143–145 (SQS) is flexible linker. Residues 145-193 (SNTNKDEALSALEVLGFIRKSAEKVVEKIVATMPDATVETIIKQALKNL) form a domain III region.

The protein belongs to the RuvA family. As to quaternary structure, homotetramer. Forms an RuvA(8)-RuvB(12)-Holliday junction (HJ) complex. HJ DNA is sandwiched between 2 RuvA tetramers; dsDNA enters through RuvA and exits via RuvB. An RuvB hexamer assembles on each DNA strand where it exits the tetramer. Each RuvB hexamer is contacted by two RuvA subunits (via domain III) on 2 adjacent RuvB subunits; this complex drives branch migration. In the full resolvosome a probable DNA-RuvA(4)-RuvB(12)-RuvC(2) complex forms which resolves the HJ.

It localises to the cytoplasm. The RuvA-RuvB-RuvC complex processes Holliday junction (HJ) DNA during genetic recombination and DNA repair, while the RuvA-RuvB complex plays an important role in the rescue of blocked DNA replication forks via replication fork reversal (RFR). RuvA specifically binds to HJ cruciform DNA, conferring on it an open structure. The RuvB hexamer acts as an ATP-dependent pump, pulling dsDNA into and through the RuvAB complex. HJ branch migration allows RuvC to scan DNA until it finds its consensus sequence, where it cleaves and resolves the cruciform DNA. This Flavobacterium psychrophilum (strain ATCC 49511 / DSM 21280 / CIP 103535 / JIP02/86) protein is Holliday junction branch migration complex subunit RuvA.